A 647-amino-acid chain; its full sequence is Indolepyruvate oxidoreductase subunit IorA (647 aa).

4Fe-4S ferredoxin-type domains lie at 585–614 (PIYH…WDPE) and 616–645 (KKAK…PMKE). The [4Fe-4S] cluster site is built by cysteine 594, cysteine 597, cysteine 600, cysteine 606, cysteine 625, cysteine 628, cysteine 631, and cysteine 635.

As to quaternary structure, heterodimer of the IorA and IorB subunits. The cofactor is [4Fe-4S] cluster.

The enzyme catalyses indole-3-pyruvate + 2 oxidized [2Fe-2S]-[ferredoxin] + CoA = (indol-3-yl)acetyl-CoA + 2 reduced [2Fe-2S]-[ferredoxin] + CO2 + H(+). Catalyzes the ferredoxin-dependent oxidative decarboxylation of arylpyruvates. The polypeptide is Indolepyruvate oxidoreductase subunit IorA (iorA) (Thermococcus kodakarensis (strain ATCC BAA-918 / JCM 12380 / KOD1) (Pyrococcus kodakaraensis (strain KOD1))).